The chain runs to 804 residues: Endoplasmin (804 aa).

Residues 1 to 21 (MRALWVLGLCCVLLTFGSVRA) form the signal peptide. The SRT pseudosubstrate motif motif lies at 42–44 (SRT). N62 carries N-linked (GlcNAc...) asparagine glycosylation. Phosphoserine is present on S64. N107 is a glycosylation site (N-linked (GlcNAc...) asparagine). Residues N107, D149, and N162 each contribute to the ATP site. K168 is subject to N6-(2-hydroxyisobutyryl)lysine. S172 is subject to Phosphoserine. F199 serves as a coordination point for ATP. A glycan (N-linked (GlcNAc...) asparagine) is linked at N217. Positions 288–323 (TVEEPMEEEEAAKEEKEESDDEAAVEEEEEEKKPKT) are disordered. The span at 289-317 (VEEPMEEEEAAKEEKEESDDEAAVEEEEE) shows a compositional bias: acidic residues. Phosphoserine is present on residues S306 and S403. The residue at position 404 (K404) is an N6-succinyllysine. N445 carries an N-linked (GlcNAc...) asparagine glycan. S447 carries the post-translational modification Phosphoserine. K479 is modified (N6-acetyllysine). Residues N481 and N502 are each glycosylated (N-linked (GlcNAc...) asparagine). Residue K633 is modified to N6-succinyllysine. The disordered stretch occupies residues 750-804 (DPDAKVEEEPEEEPEETTEDTTEDTEQDDDEEMDAGADEEEQETSETSTAEKDEL). Residues 757–793 (EEPEEEPEETTEDTTEDTEQDDDEEMDAGADEEEQET) show a composition bias toward acidic residues. Residues 801–804 (KDEL) carry the Prevents secretion from ER motif.

It belongs to the heat shock protein 90 family. In terms of assembly, homodimer; disulfide-linked. Component of an EIF2 complex at least composed of CELF1/CUGBP1, CALR, CALR3, EIF2S1, EIF2S2, HSP90B1 and HSPA5. Part of a large chaperone multiprotein complex comprising DNAJB11, HSP90B1, HSPA5, HYOU, PDIA2, PDIA4, PDIA6, PPIB, SDF2L1, UGGT1 and very small amounts of ERP29, but not, or at very low levels, CALR nor CANX. Interacts with AIMP1; regulates its retention in the endoplasmic reticulum. Hyperglycosylated form interacts with OS9; promoting its degradation by the endoplasmic reticulum associated degradation (ERAD). Interacts with CNPY3. This interaction is disrupted in the presence of ATP. Interacts with TLR4 and TLR9, but not with TLR3. Interacts with MZB1 in a calcium-dependent manner. Interacts with METTL23. Interacts with IL1B; the interaction facilitates cargo translocation into the ERGIC. Interacts with EIF2AK3. Post-translationally, phosphorylated by CK2. In terms of processing, N-glycosylated cotranslationally at Asn-217 by STT3A-containing OST-A complex: this glycosylation is constitutive. In response to various stress, 5 additional facultative sites (Asn-62, Asn-107, Asn-445, Asn-481 and Asn-502) can be glycosylated post-translationally by STT3B-containing OST-B complex, leading to a hyperglycosylated form that is degraded by the ER-associated degradation (ERAD) pathway. In normal conditions, the OST-A complex together with CCDC134 prevent glycosylation at facultative sites during protein folding, thereby preventing hyperglycosylation. Mechanistically, nascent HSP90B1 is tethered during translation to a specialized CCDC134-containing translocon that forms a microenvironment for its folding, in which STT3A associates with the SRT pseudosubstrate motif, and prevents access to facultative glycosylation sites until folding is completed, rendering its facultative sites inaccessible to the OST-B complex.

Its subcellular location is the endoplasmic reticulum lumen. It is found in the sarcoplasmic reticulum lumen. The protein resides in the melanosome. It carries out the reaction ATP + H2O = ADP + phosphate + H(+). In terms of biological role, ATP-dependent chaperone involved in the processing of proteins in the endoplasmic reticulum, regulating their transport. Together with MESD, acts as a modulator of the Wnt pathway by promoting the folding of LRP6, a coreceptor of the canonical Wnt pathway. When associated with CNPY3, required for proper folding of Toll-like receptors. Promotes folding and trafficking of TLR4 to the cell surface. May participate in the unfolding of cytosolic leaderless cargos (lacking the secretion signal sequence) such as the interleukin 1/IL-1 to facilitate their translocation into the ERGIC (endoplasmic reticulum-Golgi intermediate compartment) and secretion; the translocation process is mediated by the cargo receptor TMED10. The protein is Endoplasmin (HSP90B1) of Sus scrofa (Pig).